We begin with the raw amino-acid sequence, 491 residues long: Putative F-box/LRR-repeat protein At3g59230 (491 aa).

The region spanning 11-57 (KDIINSLPEALIYHILSFLSTKEAAITSLLSRKWRYFFAFVPNLDFD) is the F-box domain. 7 LRR repeats span residues 127–154 (LSIASDTTYLFPSKVFVSKSLVRLRIEA), 156–182 (NGLAFGSLVIDVGDVSLPKLKTLYLDS), 184–209 (ELDYQIICLAKLLSGCHVLEELVMID), 325–351 (ASTVEVLTFRCKAIPIFNNLTRLTIES), 352–377 (NTKVGWDSLPNLLKNCPNLKTLVFQG), 419–444 (NDKTELEQTKHFLELMPHLEQLNIYY), and 472–491 (VQVISDNLTLSVTLPSSSSI).

The chain is Putative F-box/LRR-repeat protein At3g59230 from Arabidopsis thaliana (Mouse-ear cress).